A 205-amino-acid chain; its full sequence is GTP cyclohydrolase-2 (205 aa).

Residue 49–53 (RIHSE) coordinates GTP. Zn(2+) contacts are provided by Cys-54, Cys-65, and Cys-67. GTP is bound by residues Gln-70, 92–94 (EGR), and Thr-114. Residue Asp-126 is the Proton acceptor of the active site. Arg-128 (nucleophile) is an active-site residue. Positions 149 and 154 each coordinate GTP.

This sequence belongs to the GTP cyclohydrolase II family. Zn(2+) is required as a cofactor.

The catalysed reaction is GTP + 4 H2O = 2,5-diamino-6-hydroxy-4-(5-phosphoribosylamino)-pyrimidine + formate + 2 phosphate + 3 H(+). Its pathway is cofactor biosynthesis; riboflavin biosynthesis; 5-amino-6-(D-ribitylamino)uracil from GTP: step 1/4. In terms of biological role, catalyzes the conversion of GTP to 2,5-diamino-6-ribosylamino-4(3H)-pyrimidinone 5'-phosphate (DARP), formate and pyrophosphate. The polypeptide is GTP cyclohydrolase-2 (Shewanella loihica (strain ATCC BAA-1088 / PV-4)).